We begin with the raw amino-acid sequence, 73 residues long: Antitoxin VapB20 (73 aa).

Functionally, antitoxin component of a type II toxin-antitoxin (TA) system. Upon expression in E.coli neutralizes the toxic effect of cognate toxin VapC20. In Mycobacterium tuberculosis (strain ATCC 25618 / H37Rv), this protein is Antitoxin VapB20 (vapB20).